Here is a 208-residue protein sequence, read N- to C-terminus: V-type ATP synthase subunit D (208 aa).

Belongs to the V-ATPase D subunit family.

Produces ATP from ADP in the presence of a proton gradient across the membrane. This chain is V-type ATP synthase subunit D, found in Chlamydia abortus (strain DSM 27085 / S26/3) (Chlamydophila abortus).